Here is a 135-residue protein sequence, read N- to C-terminus: C-type Lectin CRL (135 aa).

4 cysteine pairs are disulfide-bonded: C3–C14, C31–C131, C38–C133, and C106–C123. The 123-residue stretch at M10 to Q132 folds into the C-type lectin domain. 5 residues coordinate Ca(2+): Q96, D98, E104, N119, and D120. The Galactose-binding motif lies at Q96–D98.

It belongs to the true venom lectin family. In terms of assembly, homodimer; disulfide-linked. As to expression, expressed by the venom gland.

It localises to the secreted. Beta-galactoside and N-acetylgalactosamine (GalNAc) specific C-type lectin. This Crotalus ruber ruber (Red diamond rattlesnake) protein is C-type Lectin CRL.